A 266-amino-acid chain; its full sequence is Early E1A protein (266 aa).

Residues Pro-39–Leu-47 are interaction with RB1 in competition with E2F1. Positions Glu-75–Glu-145 are interaction with UBE2I. Positions Pro-98–Pro-102 match the PXLXP motif, interaction with host ZMYND11 motif. An LXCXE motif, interaction with host RB1 and TMEM173/STING motif is present at residues Leu-107–Glu-111. The segment at Cys-159–Cys-179 is a zinc-finger region. Positions Asn-195–Val-226 are disordered. Residues Pro-255–Ser-259 carry the PXDLS motif, CTBP-binding motif. The Nuclear localization signal signature appears at Lys-261–Cys-265.

Belongs to the adenoviridae E1A protein family. In terms of assembly, interacts with host UBE2I; this interaction interferes with polySUMOylation. Interacts with host RB1; this interaction induces the aberrant dissociation of RB1-E2F1 complex thereby disrupting the activity of RB1 and activating E2F1-regulated genes. Interacts with host ATF7; the interaction enhances ATF7-mediated viral transactivation activity which requires the zinc binding domains of both proteins. Isoform early E1A 32 kDa protein and isoform early E1A 26 kDa protein interact (via N-terminus) with CUL1 and E3 ubiquitin ligase RBX1; these interactions inhibit RBX1-CUL1-dependent elongation reaction of ubiquitin chains and attenuate ubiquitination of SCF(FBXW7) target proteins. Interacts (via PXLXP motif) with host ZMYND11/BS69 (via MYND-type zinc finger); this interaction inhibits E1A mediated transactivation. Interacts with host EP300; this interaction stimulates the acetylation of RB1 by recruiting EP300 and RB1 into a multimeric-protein complex. Interacts with host CTBP1 and CTBP2; this interaction seems to potentiate viral replication. Interacts with host DCAF7. Interacts with host DYRK1A. Interacts with host KPNA4; this interaction allows E1A import into the host nucleus. Interacts with host EP400; this interaction stabilizes MYC. Interacts with host TBP protein; this interaction probably disrupts the TBP-TATA complex. Interacts (via LXCXE motif) with host TMEM173/STING; this interaction impairs the ability of TMEM173/STING to sense cytosolic DNA and promote the production of type I interferon (IFN-alpha and IFN-beta). Interacts (via C-terminus) with host ZBED1/hDREF (via C-terminus); the interaction is direct.

The protein resides in the host nucleus. In terms of biological role, plays a role in viral genome replication by driving entry of quiescent cells into the cell cycle. Stimulation of progression from G1 to S phase allows the virus to efficiently use the cellular DNA replicating machinery to achieve viral genome replication. E1A protein has both transforming and trans-activating activities. Induces the disassembly of the E2F1 transcription factor from RB1 by direct competition for the same binding site on RB1, with subsequent transcriptional activation of E2F1-regulated S-phase genes and of the E2 region of the adenoviral genome. Release of E2F1 leads to the ARF-mediated inhibition of MDM2 and causes TP53/p53 to accumulate because it is not targeted for degradation by MDM2-mediated ubiquitination anymore. This increase in TP53, in turn, would arrest the cell proliferation and direct its death but this effect is counteracted by the viral protein E1B-55K. Inactivation of the ability of RB1 to arrest the cell cycle is critical for cellular transformation, uncontrolled cellular growth and proliferation induced by viral infection. Interaction with RBX1 and CUL1 inhibits ubiquitination of the proteins targeted by SCF(FBXW7) ubiquitin ligase complex, and may be linked to unregulated host cell proliferation. The tumorigenesis-restraining activity of E1A may be related to the disruption of the host CtBP-CtIP complex through the CtBP binding motif. Interaction with host TMEM173/STING impairs the ability of TMEM173/STING to sense cytosolic DNA and promote the production of type I interferon (IFN-alpha and IFN-beta). Promotes the sumoylation of host ZBED1/hDREF with SUMO1. The sequence is that of Early E1A protein from Homo sapiens (Human).